Consider the following 241-residue polypeptide: NEP1-interacting protein 2 (241 aa).

The tract at residues M1–S20 is disordered. The Lumenal, thylakoid segment spans residues M1 to H36. A helical transmembrane segment spans residues F37 to L57. The Stromal portion of the chain corresponds to V58–S76. Residues G77–F97 form a helical membrane-spanning segment. Residues E98–S109 lie on the Lumenal, thylakoid side of the membrane. The helical transmembrane segment at G110–V130 threads the bilayer. Topologically, residues R131–I241 are stromal. The segment at C196–R238 adopts an RING-type; atypical zinc-finger fold.

It belongs to the RING-type zinc finger family. NIP subfamily. In terms of assembly, interacts with RPOT2.

The protein resides in the plastid. Its subcellular location is the chloroplast thylakoid membrane. In terms of biological role, intrinsic thylakoid membrane protein that fixes RPOT2 on the stromal side of the thylakoid membrane. The chain is NEP1-interacting protein 2 (NIP2) from Arabidopsis thaliana (Mouse-ear cress).